The sequence spans 924 residues: Ubiquitin carboxyl-terminal hydrolase 5 (924 aa).

The DUSP domain occupies 15 to 145 (LSPEEERVFI…GPTLARRVIS (131 aa)). Over residues 64-83 (TNDGSSLSEHCDSPGSSTLK) the composition is skewed to polar residues. The tract at residues 64-87 (TNDGSSLSEHCDSPGSSTLKKPSR) is disordered. The region spanning 317-916 (TGLLNLGNTC…AAYVLFYRRK (600 aa)) is the USP domain. Cysteine 326 serves as the catalytic Nucleophile. Over residues 648–667 (REESVGKKGNSDSSIPERRS) the composition is skewed to basic and acidic residues. The segment at 648–690 (REESVGKKGNSDSSIPERRSARFNNTEEEDKVGGLKKAKKSNS) is disordered. The active-site Proton acceptor is histidine 874.

The protein belongs to the peptidase C19 family.

The enzyme catalyses Thiol-dependent hydrolysis of ester, thioester, amide, peptide and isopeptide bonds formed by the C-terminal Gly of ubiquitin (a 76-residue protein attached to proteins as an intracellular targeting signal).. Its function is as follows. Recognizes and hydrolyzes the peptide bond at the C-terminal Gly of ubiquitin. Involved in the processing of poly-ubiquitin precursors as well as that of ubiquitinated proteins. The protein is Ubiquitin carboxyl-terminal hydrolase 5 (UBP5) of Arabidopsis thaliana (Mouse-ear cress).